Consider the following 168-residue polypeptide: Endoribonuclease YbeY (168 aa).

Residues H125, H129, and H135 each contribute to the Zn(2+) site.

It belongs to the endoribonuclease YbeY family. Zn(2+) is required as a cofactor.

The protein resides in the cytoplasm. Functionally, single strand-specific metallo-endoribonuclease involved in late-stage 70S ribosome quality control and in maturation of the 3' terminus of the 16S rRNA. The polypeptide is Endoribonuclease YbeY (Rhodopseudomonas palustris (strain BisB18)).